A 272-amino-acid polypeptide reads, in one-letter code: uncharacterized protein (272 aa).

This sequence belongs to the chlamydial CPn_0389/CT_041/TC_0311 family.

This is an uncharacterized protein from Chlamydia pneumoniae (Chlamydophila pneumoniae).